A 104-amino-acid chain; its full sequence is Urease subunit beta (104 aa).

It belongs to the urease beta subunit family. Heterotrimer of UreA (gamma), UreB (beta) and UreC (alpha) subunits. Three heterotrimers associate to form the active enzyme.

It localises to the cytoplasm. The catalysed reaction is urea + 2 H2O + H(+) = hydrogencarbonate + 2 NH4(+). Its pathway is nitrogen metabolism; urea degradation; CO(2) and NH(3) from urea (urease route): step 1/1. This chain is Urease subunit beta, found in Synechococcus sp. (strain RCC307).